The sequence spans 662 residues: Probable quinol oxidase subunit 1 (662 aa).

Transmembrane regions (helical) follow at residues 14-34 and 58-78; these read WMIT…IAVI and VMYL…ALLI. Position 102 (H102) interacts with Fe(II)-heme a. The next 8 helical transmembrane spans lie at 103–123, 140–160, 187–207, 228–248, 273–293, 311–331, 336–356, and 376–396; these read GVIM…NIVV, VSFW…IIGG, IAIQ…FVTI, FITT…LALM, FFWV…FGIY, MVWA…HHFF, GALI…PTGV, and MLFS…GVML. H279, Y283, H328, and H329 together coordinate Cu cation. Residues 279 to 283 constitute a cross-link (1'-histidyl-3'-tyrosine (His-Tyr)); that stretch reads HPEVY. H414 is a heme a3 binding site. 5 helical membrane passes run 415–435, 451–471, 493–513, 587–604, and 608–627; these read FHYT…IFWY, CFWF…ILGL, ISTI…VSIV, PVGF…FFLI, and VIPA…YRSF. A Fe(II)-heme a-binding site is contributed by H416.

Belongs to the heme-copper respiratory oxidase family. Cu cation serves as cofactor. It depends on ferriheme a as a cofactor. The cofactor is Heme A3..

The protein localises to the cell membrane. It catalyses the reaction 2 a quinol + O2 = 2 a quinone + 2 H2O. Its pathway is energy metabolism; oxidative phosphorylation. Its function is as follows. Catalyzes quinol oxidation with the concomitant reduction of oxygen to water. This chain is Probable quinol oxidase subunit 1 (qoxB), found in Staphylococcus aureus (strain COL).